Here is a 479-residue protein sequence, read N- to C-terminus: Spindly-like protein spdl-1 (479 aa).

Coiled coils occupy residues Asp-4 to Leu-180, Glu-210 to Val-250, and Leu-321 to His-357.

As to quaternary structure, interacts with Zwilch homolog zwl-1, a component of the RZZ complex. Interacts with mdf-1 and mdf-2.

The protein resides in the chromosome. Its subcellular location is the centromere. The protein localises to the kinetochore. It localises to the cytoplasm. It is found in the cytoskeleton. The protein resides in the spindle pole. Transient kinetochore component required for chromosome and spindle pole alignment and chromosome segregation during mitosis. Functions downstream of the RZZ complex to mediate kinetochore-microtubule attachments and nuclear envelope breakdown during cell division. Required for kinetochore assembly and localizes the checkpoint proteins mdf-1 and mdf-2, dynein and dynactin to unattached kinetochores. Dynein is believed to control the initial lateral interaction between the kinetochore and spindle microtubules and to facilitate the subsequent formation of end-on kinetochore-microtubule attachments mediated by the NDC80 complex. Required for embryonic development. This is Spindly-like protein spdl-1 from Caenorhabditis elegans.